We begin with the raw amino-acid sequence, 59 residues long: UPF0509 protein YciZ (59 aa).

The protein belongs to the UPF0509 family.

The polypeptide is UPF0509 protein YciZ (Salmonella agona (strain SL483)).